We begin with the raw amino-acid sequence, 341 residues long: Anthranilate phosphoribosyltransferase (341 aa).

5-phospho-alpha-D-ribose 1-diphosphate contacts are provided by residues glycine 82, 85–86 (GD), threonine 90, 92–95 (NIST), 110–118 (KHGGRSVSG), and serine 122. Glycine 82 serves as a coordination point for anthranilate. Residue serine 94 participates in Mg(2+) binding. Arginine 168 contacts anthranilate. The Mg(2+) site is built by aspartate 227 and glutamate 228.

Belongs to the anthranilate phosphoribosyltransferase family. In terms of assembly, homodimer. Mg(2+) serves as cofactor.

The catalysed reaction is N-(5-phospho-beta-D-ribosyl)anthranilate + diphosphate = 5-phospho-alpha-D-ribose 1-diphosphate + anthranilate. Its pathway is amino-acid biosynthesis; L-tryptophan biosynthesis; L-tryptophan from chorismate: step 2/5. Catalyzes the transfer of the phosphoribosyl group of 5-phosphorylribose-1-pyrophosphate (PRPP) to anthranilate to yield N-(5'-phosphoribosyl)-anthranilate (PRA). The sequence is that of Anthranilate phosphoribosyltransferase from Nitrosomonas europaea (strain ATCC 19718 / CIP 103999 / KCTC 2705 / NBRC 14298).